We begin with the raw amino-acid sequence, 235 residues long: Pyridoxine 5'-phosphate synthase (235 aa).

Asn6 contributes to the 3-amino-2-oxopropyl phosphate binding site. 8–9 (DH) serves as a coordination point for 1-deoxy-D-xylulose 5-phosphate. Arg17 is a 3-amino-2-oxopropyl phosphate binding site. The active-site Proton acceptor is His42. Positions 44 and 49 each coordinate 1-deoxy-D-xylulose 5-phosphate. The Proton acceptor role is filled by Glu69. Thr99 is a binding site for 1-deoxy-D-xylulose 5-phosphate. His188 (proton donor) is an active-site residue. Residues Gly189 and 210–211 (GH) contribute to the 3-amino-2-oxopropyl phosphate site.

It belongs to the PNP synthase family. Homooctamer; tetramer of dimers.

The protein resides in the cytoplasm. The enzyme catalyses 3-amino-2-oxopropyl phosphate + 1-deoxy-D-xylulose 5-phosphate = pyridoxine 5'-phosphate + phosphate + 2 H2O + H(+). It functions in the pathway cofactor biosynthesis; pyridoxine 5'-phosphate biosynthesis; pyridoxine 5'-phosphate from D-erythrose 4-phosphate: step 5/5. Its function is as follows. Catalyzes the complicated ring closure reaction between the two acyclic compounds 1-deoxy-D-xylulose-5-phosphate (DXP) and 3-amino-2-oxopropyl phosphate (1-amino-acetone-3-phosphate or AAP) to form pyridoxine 5'-phosphate (PNP) and inorganic phosphate. The polypeptide is Pyridoxine 5'-phosphate synthase (Wolbachia sp. subsp. Drosophila simulans (strain wRi)).